A 477-amino-acid chain; its full sequence is Argininosuccinate lyase (477 aa).

Belongs to the lyase 1 family. Argininosuccinate lyase subfamily.

The protein resides in the cytoplasm. The catalysed reaction is 2-(N(omega)-L-arginino)succinate = fumarate + L-arginine. The protein operates within amino-acid biosynthesis; L-arginine biosynthesis; L-arginine from L-ornithine and carbamoyl phosphate: step 3/3. In Acinetobacter baumannii (strain AB307-0294), this protein is Argininosuccinate lyase.